We begin with the raw amino-acid sequence, 150 residues long: Protein NrdI (150 aa).

Belongs to the NrdI family.

Its function is as follows. Probably involved in ribonucleotide reductase function. The sequence is that of Protein NrdI from Mycobacterium avium (strain 104).